A 451-amino-acid chain; its full sequence is Phosphoglucosamine mutase (451 aa).

The Phosphoserine intermediate role is filled by Ser-103. 4 residues coordinate Mg(2+): Ser-103, Asp-243, Asp-245, and Asp-247. At Ser-103 the chain carries Phosphoserine.

It belongs to the phosphohexose mutase family. Mg(2+) serves as cofactor. In terms of processing, activated by phosphorylation.

It catalyses the reaction alpha-D-glucosamine 1-phosphate = D-glucosamine 6-phosphate. In terms of biological role, catalyzes the conversion of glucosamine-6-phosphate to glucosamine-1-phosphate. The protein is Phosphoglucosamine mutase of Limosilactobacillus reuteri subsp. reuteri (strain JCM 1112) (Lactobacillus reuteri).